The primary structure comprises 177 residues: MGTCPCESSERNEPVSRVSGTNEVSDGNETNNPAEVSDGNETNNPAEVSDGNETNNPAPVSRVSGTNEVSDGNETNNPAPVSRVSGTNEVSDGNETNNPAPVTEKPLHPHEPHIEILRGQPTDQELAALIAVLGSISGSTPPAQPEPTRWGLPVDQLRYPVFSWQRITLQEMTHMRR.

Residues 1–112 (MGTCPCESSE…TEKPLHPHEP (112 aa)) are disordered. The span at 18-100 (VSGTNEVSDG…SDGNETNNPA (83 aa)) shows a compositional bias: polar residues.

In terms of assembly, interacts with the AccA3/AccD5 biotin-dependent acyl-CoA carboxylase complex. Interacts with the AccA3/AccD6 complex. Is also part of the long-chain acyl-CoA carboxylase (LCC) complex, which is composed of AccA3, AccD4, AccD5 and AccE5. The four subunits are essential for activity, but AccD5, together with AccE5, probably plays a structural role rather than a catalytic one.

In terms of biological role, stimulates activity of the AccA3/AccD5 biotin-dependent acyl-CoA carboxylase complex. Interacts with AccD5 and modulates its carboxylase activity for acetyl-CoA and propionyl-CoA. Inhibits activity of the AccA3/AccD6 complex. Is also required for the activity of the long-chain acyl-CoA carboxylase (LCC) complex. The polypeptide is Biotin-dependent acetyl-/propionyl-coenzyme A carboxylase epsilon subunit (Mycobacterium tuberculosis (strain ATCC 25618 / H37Rv)).